The chain runs to 302 residues: Lysosomal thioesterase PPT2 (302 aa).

An N-terminal signal peptide occupies residues 1–27; that stretch reads MPGLWRQRLPSAWALLLLPFLPLLLPA. Asparagine 60 carries N-linked (GlcNAc...) asparagine glycosylation. 2 disulfides stabilise this stretch: cysteine 109/cysteine 117 and cysteine 165/cysteine 176. Serine 111 (nucleophile) is an active-site residue. N-linked (GlcNAc...) asparagine glycosylation is found at asparagine 190 and asparagine 206. Aspartate 228 is an active-site residue. Residue asparagine 245 is glycosylated (N-linked (GlcNAc...) asparagine). Cysteines 276 and 296 form a disulfide. Histidine 283 is a catalytic residue. N-linked (GlcNAc...) asparagine glycosylation occurs at asparagine 289.

This sequence belongs to the palmitoyl-protein thioesterase family.

Its subcellular location is the lysosome. The catalysed reaction is hexadecanoyl-CoA + H2O = hexadecanoate + CoA + H(+). It carries out the reaction S-hexadecanoyl-N-acetylcysteamine + H2O = N-acetylcysteamine + hexadecanoate + H(+). In terms of biological role, catalyzes the cleavage of thioester bonds from S-palmitoyl-CoA or S-palmitoyl-N-acetylcysteamine (unbranched structures) but does not have activity against palmitoylcysteine or palmitoylated proteins, branched structures or bulky head groups. Conversely, hydrolyzes both long and short chain fatty acyl-CoA substrate. The chain is Lysosomal thioesterase PPT2 (Ppt2) from Rattus norvegicus (Rat).